Here is a 351-residue protein sequence, read N- to C-terminus: Cell shape-determining protein MreB (351 aa).

ATP is bound by residues 20–22 (TAN), 169–171 (GGT), 217–220 (ERIK), and 299–302 (GGAL).

Belongs to the FtsA/MreB family. As to quaternary structure, forms polymers.

It is found in the cytoplasm. Its function is as follows. Forms membrane-associated dynamic filaments that are essential for cell shape determination. Acts by regulating cell wall synthesis and cell elongation, and thus cell shape. A feedback loop between cell geometry and MreB localization may maintain elongated cell shape by targeting cell wall growth to regions of negative cell wall curvature. The polypeptide is Cell shape-determining protein MreB (Haemophilus influenzae (strain ATCC 51907 / DSM 11121 / KW20 / Rd)).